Consider the following 317-residue polypeptide: Ribose-phosphate pyrophosphokinase (317 aa).

Residues 43–45 (DGE) and 102–103 (RQ) each bind ATP. Mg(2+)-binding residues include H136 and D175. Residue K198 is part of the active site. Residues R200, D224, and 228-232 (DTAGT) each bind D-ribose 5-phosphate.

The protein belongs to the ribose-phosphate pyrophosphokinase family. Class I subfamily. Homohexamer. Requires Mg(2+) as cofactor.

Its subcellular location is the cytoplasm. The enzyme catalyses D-ribose 5-phosphate + ATP = 5-phospho-alpha-D-ribose 1-diphosphate + AMP + H(+). It functions in the pathway metabolic intermediate biosynthesis; 5-phospho-alpha-D-ribose 1-diphosphate biosynthesis; 5-phospho-alpha-D-ribose 1-diphosphate from D-ribose 5-phosphate (route I): step 1/1. Its function is as follows. Involved in the biosynthesis of the central metabolite phospho-alpha-D-ribosyl-1-pyrophosphate (PRPP) via the transfer of pyrophosphoryl group from ATP to 1-hydroxyl of ribose-5-phosphate (Rib-5-P). The polypeptide is Ribose-phosphate pyrophosphokinase (Corynebacterium ammoniagenes (Brevibacterium ammoniagenes)).